Consider the following 313-residue polypeptide: Ribosomal RNA small subunit methyltransferase H (313 aa).

S-adenosyl-L-methionine is bound by residues 35-37 (GGH), D55, F79, D100, and Q107.

This sequence belongs to the methyltransferase superfamily. RsmH family.

The protein resides in the cytoplasm. The catalysed reaction is cytidine(1402) in 16S rRNA + S-adenosyl-L-methionine = N(4)-methylcytidine(1402) in 16S rRNA + S-adenosyl-L-homocysteine + H(+). Its function is as follows. Specifically methylates the N4 position of cytidine in position 1402 (C1402) of 16S rRNA. The sequence is that of Ribosomal RNA small subunit methyltransferase H from Burkholderia mallei (strain NCTC 10247).